A 61-amino-acid chain; its full sequence is Ferredoxin-2 (61 aa).

2 4Fe-4S ferredoxin-type domains span residues His-2–Asp-27 and Glu-28–Val-61. Residues Cys-8, Cys-11, Cys-14, Cys-18, Cys-37, Cys-40, Cys-49, and Cys-53 each contribute to the [4Fe-4S] cluster site.

[4Fe-4S] cluster is required as a cofactor.

In terms of biological role, ferredoxins are iron-sulfur proteins that transfer electrons in a wide variety of metabolic reactions. The protein is Ferredoxin-2 of Chlorobium limicola.